The primary structure comprises 345 residues: Protein RecA (345 aa).

65 to 72 (GPESSGKT) lines the ATP pocket.

It belongs to the RecA family.

It is found in the cytoplasm. Its function is as follows. Can catalyze the hydrolysis of ATP in the presence of single-stranded DNA, the ATP-dependent uptake of single-stranded DNA by duplex DNA, and the ATP-dependent hybridization of homologous single-stranded DNAs. It interacts with LexA causing its activation and leading to its autocatalytic cleavage. This chain is Protein RecA, found in Colwellia psychrerythraea (strain 34H / ATCC BAA-681) (Vibrio psychroerythus).